Consider the following 423-residue polypeptide: Probable serine/threonine-protein kinase PBL5 (423 aa).

Residues Met1–Lys66 are disordered. A lipid anchor (N-myristoyl glycine) is attached at Gly2. Cys3 carries S-palmitoyl cysteine lipidation. The segment covering Lys12–Ile22 has biased composition (basic and acidic residues). The span at Thr43–Val52 shows a compositional bias: polar residues. Thr92 is modified (phosphothreonine). A Protein kinase domain is found at Phe103 to Leu380. Residues Leu109–Val117 and Lys132 contribute to the ATP site. At Tyr177 the chain carries Phosphotyrosine. Asp230 functions as the Proton acceptor in the catalytic mechanism. 2 positions are modified to phosphoserine: Ser234 and Ser264. Phosphothreonine occurs at positions 265 and 270. Tyr278 carries the post-translational modification Phosphotyrosine. Over residues Ser383–Pro398 the composition is skewed to low complexity. The interval Ser383–Ser423 is disordered. The segment covering Phe400 to Ser423 has biased composition (basic and acidic residues).

This sequence belongs to the protein kinase superfamily. Ser/Thr protein kinase family. Palmitoylation at Cys-3 and Cys-6 are required for plasma membrane location.

The protein localises to the cell membrane. The enzyme catalyses L-seryl-[protein] + ATP = O-phospho-L-seryl-[protein] + ADP + H(+). The catalysed reaction is L-threonyl-[protein] + ATP = O-phospho-L-threonyl-[protein] + ADP + H(+). Its function is as follows. May be involved in plant defense signaling. The polypeptide is Probable serine/threonine-protein kinase PBL5 (Arabidopsis thaliana (Mouse-ear cress)).